A 406-amino-acid polypeptide reads, in one-letter code: MYAPMMPSPTAVAAPVAALSILPSLAGLDREKLGLALAAIGVPERERKMRVNQLWHWIYLRGATDFAEMTNVSKTLRTQLAEHYSLARPEIVVEQVSQDGTRKWLLRLPAETPGERPHEVEAVYIPERDRGTLCVSSQVGCTLNCAFCHTGTQRLVRNLTAAEIVAQVLVARDRLGDYPGRERAVGPGLPTEGDRLVTNIVFMGMGEPLYAYDSVAEAIEILADGDGLGLGKRRITVSTSGVVPEIEKLGREVGPMLAISLHAVRDDLRDVLVPINKKYPIAELMEACRTYPAASNAKRITFEYVMLKGVNDSPADARALVKLLEGVPAKINLIPFNPWPGTKYECSDWETIEKFSDIVFRAGYASPVRTPRGRDILAACGQLKSETEKLSARERLALRAMAAAAE.

E121 functions as the Proton acceptor in the catalytic mechanism. The Radical SAM core domain maps to E127–L377. Residues C134 and C380 are joined by a disulfide bond. [4Fe-4S] cluster is bound by residues C141, C145, and C148. Residues G206–E207, S238, S260–H262, and N337 contribute to the S-adenosyl-L-methionine site. The active-site S-methylcysteine intermediate is C380.

Belongs to the radical SAM superfamily. RlmN family. Requires [4Fe-4S] cluster as cofactor.

Its subcellular location is the cytoplasm. It catalyses the reaction adenosine(2503) in 23S rRNA + 2 reduced [2Fe-2S]-[ferredoxin] + 2 S-adenosyl-L-methionine = 2-methyladenosine(2503) in 23S rRNA + 5'-deoxyadenosine + L-methionine + 2 oxidized [2Fe-2S]-[ferredoxin] + S-adenosyl-L-homocysteine. The enzyme catalyses adenosine(37) in tRNA + 2 reduced [2Fe-2S]-[ferredoxin] + 2 S-adenosyl-L-methionine = 2-methyladenosine(37) in tRNA + 5'-deoxyadenosine + L-methionine + 2 oxidized [2Fe-2S]-[ferredoxin] + S-adenosyl-L-homocysteine. Functionally, specifically methylates position 2 of adenine 2503 in 23S rRNA and position 2 of adenine 37 in tRNAs. m2A2503 modification seems to play a crucial role in the proofreading step occurring at the peptidyl transferase center and thus would serve to optimize ribosomal fidelity. In Azorhizobium caulinodans (strain ATCC 43989 / DSM 5975 / JCM 20966 / LMG 6465 / NBRC 14845 / NCIMB 13405 / ORS 571), this protein is Dual-specificity RNA methyltransferase RlmN.